Consider the following 248-residue polypeptide: tRNA1(Val) (adenine(37)-N6)-methyltransferase (248 aa).

Belongs to the methyltransferase superfamily. tRNA (adenine-N(6)-)-methyltransferase family.

It localises to the cytoplasm. The catalysed reaction is adenosine(37) in tRNA1(Val) + S-adenosyl-L-methionine = N(6)-methyladenosine(37) in tRNA1(Val) + S-adenosyl-L-homocysteine + H(+). Specifically methylates the adenine in position 37 of tRNA(1)(Val) (anticodon cmo5UAC). This is tRNA1(Val) (adenine(37)-N6)-methyltransferase from Musicola paradisiaca (strain Ech703) (Dickeya paradisiaca).